Consider the following 442-residue polypeptide: tRNA-2-methylthio-N(6)-dimethylallyladenosine synthase (442 aa).

In terms of domain architecture, MTTase N-terminal spans 6–122; it reads RKFYIHTFGC…LPALIAEAGD (117 aa). Positions 15, 51, 85, 157, 161, and 164 each coordinate [4Fe-4S] cluster. The Radical SAM core domain occupies 143-373; that stretch reads RTQSLNAFVP…IDLQNGISAE (231 aa). The TRAM domain maps to 376–439; that stretch reads GLAPGSVVEV…SATLFGQSAE (64 aa).

The protein belongs to the methylthiotransferase family. MiaB subfamily. In terms of assembly, monomer. Requires [4Fe-4S] cluster as cofactor.

It localises to the cytoplasm. The catalysed reaction is N(6)-dimethylallyladenosine(37) in tRNA + (sulfur carrier)-SH + AH2 + 2 S-adenosyl-L-methionine = 2-methylsulfanyl-N(6)-dimethylallyladenosine(37) in tRNA + (sulfur carrier)-H + 5'-deoxyadenosine + L-methionine + A + S-adenosyl-L-homocysteine + 2 H(+). In terms of biological role, catalyzes the methylthiolation of N6-(dimethylallyl)adenosine (i(6)A), leading to the formation of 2-methylthio-N6-(dimethylallyl)adenosine (ms(2)i(6)A) at position 37 in tRNAs that read codons beginning with uridine. In Chlorobium phaeobacteroides (strain DSM 266 / SMG 266 / 2430), this protein is tRNA-2-methylthio-N(6)-dimethylallyladenosine synthase.